We begin with the raw amino-acid sequence, 341 residues long: Formimidoylglutamase (341 aa).

Histidine 133, aspartate 162, histidine 164, aspartate 166, cysteine 253, and aspartate 255 together coordinate Mn(2+).

The protein belongs to the arginase family. It depends on Mn(2+) as a cofactor.

It carries out the reaction N-formimidoyl-L-glutamate + H2O = formamide + L-glutamate. It functions in the pathway amino-acid degradation; L-histidine degradation into L-glutamate; L-glutamate from N-formimidoyl-L-glutamate (hydrolase route): step 1/1. In terms of biological role, catalyzes the conversion of N-formimidoyl-L-glutamate to L-glutamate and formamide. The polypeptide is Formimidoylglutamase (Aromatoleum aromaticum (strain DSM 19018 / LMG 30748 / EbN1) (Azoarcus sp. (strain EbN1))).